The chain runs to 194 residues: Peptidyl-tRNA hydrolase (194 aa).

Tyrosine 16 is a binding site for tRNA. Histidine 21 serves as the catalytic Proton acceptor. Residues phenylalanine 67, asparagine 69, and asparagine 115 each contribute to the tRNA site.

It belongs to the PTH family. As to quaternary structure, monomer.

Its subcellular location is the cytoplasm. It carries out the reaction an N-acyl-L-alpha-aminoacyl-tRNA + H2O = an N-acyl-L-amino acid + a tRNA + H(+). In terms of biological role, hydrolyzes ribosome-free peptidyl-tRNAs (with 1 or more amino acids incorporated), which drop off the ribosome during protein synthesis, or as a result of ribosome stalling. Functionally, catalyzes the release of premature peptidyl moieties from peptidyl-tRNA molecules trapped in stalled 50S ribosomal subunits, and thus maintains levels of free tRNAs and 50S ribosomes. The sequence is that of Peptidyl-tRNA hydrolase from Sodalis glossinidius (strain morsitans).